A 718-amino-acid polypeptide reads, in one-letter code: SANT and BTB domain regulator of class switch recombination (718 aa).

An SANT domain is found at 21-59; the sequence is DMILYPLIGIPQTINWETVARLVPGLTPKECVKRFDELK. The BTB domain maps to 147–255; that stretch reads MVIHVCDEAK…QCIQYCHKNM (109 aa). A compositionally biased stretch (acidic residues) spans 555-576; sequence SEEEEYTTGSEVTEDEVGDEEE. Disordered regions lie at residues 555-622 and 690-718; these read SEEE…SPFV and RASVPVTARQNSSDKNQRSKSRFGQGRPA. Positions 580–595 are enriched in basic residues; sequence KQRKKEKPKKFTKPPK. Positions 604-615 are enriched in basic and acidic residues; that stretch reads QKKEKTLEKSTS.

It belongs to the KIAA1841 family. As to quaternary structure, homodimer. Interacts (via the BTB domain) with HDAC1 and NCOR2.

Functionally, negatively regulates class switch recombination or isotype switching in splenic B-cells. This Mus musculus (Mouse) protein is SANT and BTB domain regulator of class switch recombination.